The chain runs to 396 residues: Imidazolonepropionase (396 aa).

Positions 70 and 72 each coordinate Fe(3+). Positions 70 and 72 each coordinate Zn(2+). Residues arginine 79, tyrosine 137, and histidine 164 each coordinate 4-imidazolone-5-propanoate. Tyrosine 137 is a binding site for N-formimidoyl-L-glutamate. Histidine 227 lines the Fe(3+) pocket. A Zn(2+)-binding site is contributed by histidine 227. A 4-imidazolone-5-propanoate-binding site is contributed by glutamine 230. Aspartate 301 provides a ligand contact to Fe(3+). Aspartate 301 provides a ligand contact to Zn(2+). Residues asparagine 303 and glycine 305 each coordinate N-formimidoyl-L-glutamate. Position 306 (serine 306) interacts with 4-imidazolone-5-propanoate.

The protein belongs to the metallo-dependent hydrolases superfamily. HutI family. The cofactor is Zn(2+). Fe(3+) serves as cofactor.

Its subcellular location is the cytoplasm. The enzyme catalyses 4-imidazolone-5-propanoate + H2O = N-formimidoyl-L-glutamate. It functions in the pathway amino-acid degradation; L-histidine degradation into L-glutamate; N-formimidoyl-L-glutamate from L-histidine: step 3/3. Catalyzes the hydrolytic cleavage of the carbon-nitrogen bond in imidazolone-5-propanoate to yield N-formimidoyl-L-glutamate. It is the third step in the universal histidine degradation pathway. The chain is Imidazolonepropionase from Mycolicibacterium smegmatis (strain ATCC 700084 / mc(2)155) (Mycobacterium smegmatis).